The primary structure comprises 531 residues: uncharacterized protein (531 aa).

Positions 1 to 28 are cleaved as a signal peptide; that stretch reads MNTKGIIAKLTAGALIANLLICPANTLA. SLH domains are found at residues 29–85, 86–149, and 150–210; these read EKKT…QINK, QAKP…IGDL, and PTQF…SKRM. One can recognise a MurNAc-LAA domain in the interval 335-517; the sequence is IIIDPGHGGI…AAEAIYAGIL (183 aa).

The protein in the C-terminal section; belongs to the N-acetylmuramoyl-L-alanine amidase 3 family.

It localises to the secreted. Its subcellular location is the cell wall. The protein localises to the S-layer. This is an uncharacterized protein from Bacillus anthracis.